The sequence spans 88 residues: NADH-ubiquinone oxidoreductase chain 4L (88 aa).

2 helical membrane passes run 22 to 42 (IILM…LVLV) and 57 to 77 (IYII…LVAY).

The protein belongs to the complex I subunit 4L family.

Its subcellular location is the mitochondrion membrane. The catalysed reaction is a ubiquinone + NADH + 5 H(+)(in) = a ubiquinol + NAD(+) + 4 H(+)(out). Its function is as follows. Core subunit of the mitochondrial membrane respiratory chain NADH dehydrogenase (Complex I) that is believed to belong to the minimal assembly required for catalysis. Complex I functions in the transfer of electrons from NADH to the respiratory chain. The immediate electron acceptor for the enzyme is believed to be ubiquinone. The polypeptide is NADH-ubiquinone oxidoreductase chain 4L (ND4L) (Trimorphomyces papilionaceus (Jelly fungus)).